Consider the following 65-residue polypeptide: Large ribosomal subunit protein bL35 (65 aa).

Belongs to the bacterial ribosomal protein bL35 family.

The sequence is that of Large ribosomal subunit protein bL35 from Edwardsiella ictaluri (strain 93-146).